The chain runs to 490 residues: COP9 signalosome complex subunit 2 (490 aa).

Over residues 1–30 (MSDDDFMQDSDQEYDFEYEDDEEEDTGDVD) the composition is skewed to acidic residues. Residues 1–32 (MSDDDFMQDSDQEYDFEYEDDEEEDTGDVDIE) form a disordered region. A PCI domain is found at 250–418 (SEENWKEAQS…GVLELESRED (169 aa)). The disordered stretch occupies residues 469-490 (DTMRSMGSGKRGRRVGLTQRAY).

The protein belongs to the CSN2 family. As to quaternary structure, component of the COP9 signalosome (CSN) complex.

It localises to the cytoplasm. Its subcellular location is the nucleus. Its function is as follows. Component of the COP9 signalosome (CSN) complex that acts as an regulator of the ubiquitin (Ubl) conjugation pathway by mediating the deneddylation of the cullin subunit of SCF-type E3 ubiquitin-protein ligase complexes. The CSN complex is involved in the regulation of the circadian clock through its control of the stability of the SCF(FWD-1) complex. This is COP9 signalosome complex subunit 2 (csn-2) from Neurospora crassa (strain ATCC 24698 / 74-OR23-1A / CBS 708.71 / DSM 1257 / FGSC 987).